Reading from the N-terminus, the 701-residue chain is Glycine--tRNA ligase beta subunit (701 aa).

This sequence belongs to the class-II aminoacyl-tRNA synthetase family. As to quaternary structure, tetramer of two alpha and two beta subunits.

It localises to the cytoplasm. It carries out the reaction tRNA(Gly) + glycine + ATP = glycyl-tRNA(Gly) + AMP + diphosphate. In Thiobacillus denitrificans (strain ATCC 25259 / T1), this protein is Glycine--tRNA ligase beta subunit.